The sequence spans 388 residues: Chorismate synthase (388 aa).

NADP(+)-binding residues include Arg-39 and Arg-45. FMN is bound by residues 130–132 (RSS), 251–252 (NA), Gly-296, 311–315 (KPIPT), and Arg-337.

The protein belongs to the chorismate synthase family. In terms of assembly, homotetramer. FMNH2 is required as a cofactor.

It catalyses the reaction 5-O-(1-carboxyvinyl)-3-phosphoshikimate = chorismate + phosphate. Its pathway is metabolic intermediate biosynthesis; chorismate biosynthesis; chorismate from D-erythrose 4-phosphate and phosphoenolpyruvate: step 7/7. Catalyzes the anti-1,4-elimination of the C-3 phosphate and the C-6 proR hydrogen from 5-enolpyruvylshikimate-3-phosphate (EPSP) to yield chorismate, which is the branch point compound that serves as the starting substrate for the three terminal pathways of aromatic amino acid biosynthesis. This reaction introduces a second double bond into the aromatic ring system. The protein is Chorismate synthase of Streptococcus pneumoniae (strain ATCC 700669 / Spain 23F-1).